The following is a 433-amino-acid chain: Glutamate--tRNA ligase (433 aa).

Positions P10–G20 match the 'HIGH' region motif. Positions K211 to R215 match the 'KMSKS' region motif. K214 is an ATP binding site.

Belongs to the class-I aminoacyl-tRNA synthetase family. Glutamate--tRNA ligase type 1 subfamily. As to quaternary structure, monomer.

It localises to the cytoplasm. The enzyme catalyses tRNA(Glu) + L-glutamate + ATP = L-glutamyl-tRNA(Glu) + AMP + diphosphate. Functionally, catalyzes the attachment of glutamate to tRNA(Glu) in a two-step reaction: glutamate is first activated by ATP to form Glu-AMP and then transferred to the acceptor end of tRNA(Glu). The protein is Glutamate--tRNA ligase of Akkermansia muciniphila (strain ATCC BAA-835 / DSM 22959 / JCM 33894 / BCRC 81048 / CCUG 64013 / CIP 107961 / Muc).